The chain runs to 257 residues: tRNA pseudouridine synthase A (257 aa).

The Nucleophile role is filled by aspartate 53. A substrate-binding site is contributed by tyrosine 111.

Belongs to the tRNA pseudouridine synthase TruA family. As to quaternary structure, homodimer.

It catalyses the reaction uridine(38/39/40) in tRNA = pseudouridine(38/39/40) in tRNA. Its function is as follows. Formation of pseudouridine at positions 38, 39 and 40 in the anticodon stem and loop of transfer RNAs. In Xanthomonas euvesicatoria pv. vesicatoria (strain 85-10) (Xanthomonas campestris pv. vesicatoria), this protein is tRNA pseudouridine synthase A.